A 434-amino-acid chain; its full sequence is MKTLRLNFRSAILKALGALLLLQGCLAHAQVQELDRVVAVVNDDIVLYSELQDRASRIKDKLRQQKTPLPPEAVLHEKVLDQLVLESIQMQMADRGGIRVSDSQLNQTMQNIAKQNGMTLDQFQQALSEEGVTYQSAREQIRREMIISRVQQRSVDSRVRVTEKEVNDFLKSASAKEQRAEEYHLAHILIALPENPSDAQRKEAESKVEKIRSQLDQGVDFKQLAITYSDASTATQGGDLGWRKPDQVPSLFADVAPKLAPGQTSEPIRNSSGVHFVAMLEKRGGVSKVVEQSKVRHILVQQNELRDEIAAKKLIEEIYGKVQAGEDFAELAKAYSDDAVSAAAGGSLDWVNPGDMVPEFDQMMRETPVGAVSKPFQSTFGWHILQVQDRREADIGDRLMASQARQVLHRRKYEEELQNWLSEIRDEAFVQLKL.

The N-terminal stretch at Met1–Ala29 is a signal peptide. PpiC domains are found at residues Ala180–Glu281 and Val290–Asp389.

Its subcellular location is the periplasm. The catalysed reaction is [protein]-peptidylproline (omega=180) = [protein]-peptidylproline (omega=0). Its function is as follows. Chaperone involved in the correct folding and assembly of outer membrane proteins. Recognizes specific patterns of aromatic residues and the orientation of their side chains, which are found more frequently in integral outer membrane proteins. May act in both early periplasmic and late outer membrane-associated steps of protein maturation. The chain is Chaperone SurA from Hahella chejuensis (strain KCTC 2396).